We begin with the raw amino-acid sequence, 955 residues long: Mediator of RNA polymerase II transcription subunit 16 (955 aa).

Positions 855 to 874 (ALPETNANANANQNGKSSTQ) are disordered. Polar residues predominate over residues 857–873 (PETNANANANQNGKSST).

Belongs to the Mediator complex subunit 16 family. In terms of assembly, component of the Mediator complex.

The protein localises to the nucleus. Functionally, component of the Mediator complex, a coactivator involved in the regulated transcription of nearly all RNA polymerase II-dependent genes. Mediator functions as a bridge to convey information from gene-specific regulatory proteins to the basal RNA polymerase II transcription machinery. Mediator is recruited to promoters by direct interactions with regulatory proteins and serves as a scaffold for the assembly of a functional preinitiation complex with RNA polymerase II and the general transcription factors. This chain is Mediator of RNA polymerase II transcription subunit 16 (sin4), found in Aspergillus fumigatus (strain ATCC MYA-4609 / CBS 101355 / FGSC A1100 / Af293) (Neosartorya fumigata).